The following is a 535-amino-acid chain: Signal transduction histidine-protein kinase AfsQ2 (535 aa).

Residues 1 to 30 are Cytoplasmic-facing; that stretch reads MTREHQGGTRGLAAARKGFWSGLRFTSLRL. The chain crosses the membrane as a helical span at residues 31 to 52; sequence RLVLVFGLVALTAAVSASGIAY. At 53–198 the chain is on the extracellular side; it reads WLNREAVLTR…SLEPEAKDLN (146 aa). The helical transmembrane segment at 199-219 threads the bilayer; it reads SLAWSLGIATALALLGSALLA. Residues 220 to 535 are Cytoplasmic-facing; that stretch reads QALATTVLKP…DRGKDAKGQV (316 aa). Positions 224–276 constitute an HAMP domain; sequence TTVLKPVHRLGVAARRLGEGKLDTRLRVSGTDELADLSRTFNSAAENLEKRVA. Residues 291 to 510 form the Histidine kinase domain; that stretch reads DMSHELRTPL…VFTLRLPQDP (220 aa). Histidine 294 bears the Phosphohistidine mark. The segment at 493–535 is disordered; it reads ENAPEGGAVFTLRLPQDPSPPADEDGGPDEETEDRGKDAKGQV. Positions 514–525 are enriched in acidic residues; sequence ADEDGGPDEETE. The span at 526-535 shows a compositional bias: basic and acidic residues; that stretch reads DRGKDAKGQV.

Its subcellular location is the cell membrane. The enzyme catalyses ATP + protein L-histidine = ADP + protein N-phospho-L-histidine.. In terms of biological role, forms part of a two-component regulatory system AfsQ1/AfsQ2 involved in secondary metabolism. May activate AfsQ1 by phosphorylation. This chain is Signal transduction histidine-protein kinase AfsQ2 (afsQ2), found in Streptomyces coelicolor (strain ATCC BAA-471 / A3(2) / M145).